Reading from the N-terminus, the 440-residue chain is Chromosome partition protein MukF (440 aa).

The tract at residues 208 to 236 (LSETSGTLRELQDTLEAAGDKLQANLLRI) is leucine-zipper.

It belongs to the MukF family. Interacts, and probably forms a ternary complex, with MukE and MukB via its C-terminal region. The complex formation is stimulated by calcium or magnesium. It is required for an interaction between MukE and MukB.

The protein localises to the cytoplasm. The protein resides in the nucleoid. In terms of biological role, involved in chromosome condensation, segregation and cell cycle progression. May participate in facilitating chromosome segregation by condensation DNA from both sides of a centrally located replisome during cell division. Not required for mini-F plasmid partitioning. Probably acts via its interaction with MukB and MukE. Overexpression results in anucleate cells. It has a calcium binding activity. This is Chromosome partition protein MukF from Edwardsiella ictaluri (strain 93-146).